The primary structure comprises 228 residues: 7-cyano-7-deazaguanine synthase (228 aa).

Residue 9–19 (YSGGLDSTTCM) participates in ATP binding. The Zn(2+) site is built by Cys-189, Cys-199, Cys-202, and Cys-205.

It belongs to the QueC family. Zn(2+) serves as cofactor.

The enzyme catalyses 7-carboxy-7-deazaguanine + NH4(+) + ATP = 7-cyano-7-deazaguanine + ADP + phosphate + H2O + H(+). Its pathway is purine metabolism; 7-cyano-7-deazaguanine biosynthesis. Its function is as follows. Catalyzes the ATP-dependent conversion of 7-carboxy-7-deazaguanine (CDG) to 7-cyano-7-deazaguanine (preQ(0)). The chain is 7-cyano-7-deazaguanine synthase from Geotalea uraniireducens (strain Rf4) (Geobacter uraniireducens).